We begin with the raw amino-acid sequence, 419 residues long: Light-independent protochlorophyllide reductase subunit N (419 aa).

Positions 17, 42, and 103 each coordinate [4Fe-4S] cluster.

Belongs to the BchN/ChlN family. Protochlorophyllide reductase is composed of three subunits; ChlL, ChlN and ChlB. Forms a heterotetramer of two ChlB and two ChlN subunits. Requires [4Fe-4S] cluster as cofactor.

It carries out the reaction chlorophyllide a + oxidized 2[4Fe-4S]-[ferredoxin] + 2 ADP + 2 phosphate = protochlorophyllide a + reduced 2[4Fe-4S]-[ferredoxin] + 2 ATP + 2 H2O. It functions in the pathway porphyrin-containing compound metabolism; chlorophyll biosynthesis (light-independent). In terms of biological role, component of the dark-operative protochlorophyllide reductase (DPOR) that uses Mg-ATP and reduced ferredoxin to reduce ring D of protochlorophyllide (Pchlide) to form chlorophyllide a (Chlide). This reaction is light-independent. The NB-protein (ChlN-ChlB) is the catalytic component of the complex. In Prochlorococcus marinus (strain NATL1A), this protein is Light-independent protochlorophyllide reductase subunit N.